We begin with the raw amino-acid sequence, 203 residues long: Endothelin-1 (203 aa).

Residues 1–25 (MDYFPMIIALLFVAFQGAPETAVLG) form the signal peptide. Residues 26-50 (AELSPEAESQGETPSPHASWRPRRS) constitute a propeptide that is removed on maturation. Residues 27–48 (ELSPEAESQGETPSPHASWRPR) are disordered. 2 disulfide bridges follow: Cys53-Cys67 and Cys55-Cys63. Positions 83 to 203 (YGLGSPSRSR…DKKVTHNRTH (121 aa)) are excised as a propeptide. Positions 110-124 (CQCASQKDKKCWSFC) are endothelin-like. Asn200 carries an N-linked (GlcNAc...) asparagine glycan.

This sequence belongs to the endothelin/sarafotoxin family.

It localises to the secreted. Functionally, endothelins are endothelium-derived vasoconstrictor peptides. Probable ligand for G-protein coupled receptors EDNRA and EDNRB which activates PTK2B, BCAR1, BCAR3 and, GTPases RAP1 and RHOA cascade in glomerular mesangial cells. Also binds the DEAR/FBXW7-AS1 receptor. Promotes mesenteric arterial wall remodeling via activation of ROCK signaling and subsequent colocalization of NFATC3 with F-actin filaments. NFATC3 then translocates to the nucleus where it subsequently promotes the transcription of the smooth muscle hypertrophy and differentiation marker ACTA2. This is Endothelin-1 (EDN1) from Sus scrofa (Pig).